The sequence spans 62 residues: Photosystem II reaction center protein Z (62 aa).

2 consecutive transmembrane segments (helical) span residues 8–28 and 41–61; these read AVFA…VVFA and FSGT…NSLI.

The protein belongs to the PsbZ family. In terms of assembly, PSII is composed of 1 copy each of membrane proteins PsbA, PsbB, PsbC, PsbD, PsbE, PsbF, PsbH, PsbI, PsbJ, PsbK, PsbL, PsbM, PsbT, PsbY, PsbZ, Psb30/Ycf12, at least 3 peripheral proteins of the oxygen-evolving complex and a large number of cofactors. It forms dimeric complexes.

It localises to the plastid. Its subcellular location is the chloroplast thylakoid membrane. May control the interaction of photosystem II (PSII) cores with the light-harvesting antenna, regulates electron flow through the 2 photosystem reaction centers. PSII is a light-driven water plastoquinone oxidoreductase, using light energy to abstract electrons from H(2)O, generating a proton gradient subsequently used for ATP formation. The chain is Photosystem II reaction center protein Z from Panax ginseng (Korean ginseng).